Consider the following 205-residue polypeptide: High frequency lysogenization protein HflD homolog (205 aa).

Belongs to the HflD family.

It localises to the cytoplasm. The protein localises to the cell inner membrane. This Vibrio vulnificus (strain CMCP6) protein is High frequency lysogenization protein HflD homolog.